Reading from the N-terminus, the 216-residue chain is Uracil phosphoribosyltransferase (216 aa).

Residues arginine 85, arginine 110, and 135–143 (DPMVATGYS) contribute to the 5-phospho-alpha-D-ribose 1-diphosphate site. Residues isoleucine 200 and 205-207 (GDA) contribute to the uracil site. Aspartate 206 is a 5-phospho-alpha-D-ribose 1-diphosphate binding site.

The protein belongs to the UPRTase family. The cofactor is Mg(2+).

The catalysed reaction is UMP + diphosphate = 5-phospho-alpha-D-ribose 1-diphosphate + uracil. It functions in the pathway pyrimidine metabolism; UMP biosynthesis via salvage pathway; UMP from uracil: step 1/1. Its activity is regulated as follows. Allosterically activated by GTP. Functionally, catalyzes the conversion of uracil and 5-phospho-alpha-D-ribose 1-diphosphate (PRPP) to UMP and diphosphate. This chain is Uracil phosphoribosyltransferase, found in Burkholderia multivorans (strain ATCC 17616 / 249).